A 101-amino-acid polypeptide reads, in one-letter code: UPF0235 protein MmarC7_0309 (101 aa).

This sequence belongs to the UPF0235 family.

The polypeptide is UPF0235 protein MmarC7_0309 (Methanococcus maripaludis (strain C7 / ATCC BAA-1331)).